A 322-amino-acid polypeptide reads, in one-letter code: Pantothenate kinase (322 aa).

Glycine 100–serine 107 serves as a coordination point for ATP.

This sequence belongs to the prokaryotic pantothenate kinase family.

Its subcellular location is the cytoplasm. The enzyme catalyses (R)-pantothenate + ATP = (R)-4'-phosphopantothenate + ADP + H(+). It participates in cofactor biosynthesis; coenzyme A biosynthesis; CoA from (R)-pantothenate: step 1/5. This Brucella canis (strain ATCC 23365 / NCTC 10854 / RM-666) protein is Pantothenate kinase.